We begin with the raw amino-acid sequence, 431 residues long: Glutamate-1-semialdehyde 2,1-aminomutase (431 aa).

N6-(pyridoxal phosphate)lysine is present on Lys269.

The protein belongs to the class-III pyridoxal-phosphate-dependent aminotransferase family. HemL subfamily. Homodimer. Pyridoxal 5'-phosphate serves as cofactor.

The protein localises to the cytoplasm. It catalyses the reaction (S)-4-amino-5-oxopentanoate = 5-aminolevulinate. The protein operates within porphyrin-containing compound metabolism; protoporphyrin-IX biosynthesis; 5-aminolevulinate from L-glutamyl-tRNA(Glu): step 2/2. This is Glutamate-1-semialdehyde 2,1-aminomutase from Francisella tularensis subsp. mediasiatica (strain FSC147).